Here is a 118-residue protein sequence, read N- to C-terminus: Large ribosomal subunit protein bL19 (118 aa).

It belongs to the bacterial ribosomal protein bL19 family.

This protein is located at the 30S-50S ribosomal subunit interface and may play a role in the structure and function of the aminoacyl-tRNA binding site. This is Large ribosomal subunit protein bL19 from Helicobacter hepaticus (strain ATCC 51449 / 3B1).